Consider the following 315-residue polypeptide: PIH1 domain-containing protein 2 (315 aa).

The protein belongs to the PIH1 family.

The polypeptide is PIH1 domain-containing protein 2 (PIH1D2) (Homo sapiens (Human)).